A 205-amino-acid polypeptide reads, in one-letter code: Molybdopterin synthase catalytic subunit (205 aa).

The interval 1–36 is disordered; that stretch reads MQHPTLQPEVDPNPVVSSSSSSSSSNPLPAHLNPAN. Substrate is bound by residues 146-147, Lys162, and 169-171; these read HR and KRE. The tract at residues 179 to 205 is disordered; that stretch reads GEGEGEWRANRDTDSQGNCRGDKVAEG. The segment covering 183–205 has biased composition (basic and acidic residues); sequence GEWRANRDTDSQGNCRGDKVAEG.

This sequence belongs to the MoaE family. MOCS2B subfamily. As to quaternary structure, heterotetramer; composed of 2 small (MOCS2A) and 2 large (MOCS2B) subunits.

Its subcellular location is the cytoplasm. The catalysed reaction is 2 [molybdopterin-synthase sulfur-carrier protein]-C-terminal-Gly-aminoethanethioate + cyclic pyranopterin phosphate + H2O = molybdopterin + 2 [molybdopterin-synthase sulfur-carrier protein]-C-terminal Gly-Gly + 2 H(+). The protein operates within cofactor biosynthesis; molybdopterin biosynthesis. Catalytic subunit of the molybdopterin synthase complex, a complex that catalyzes the conversion of precursor Z into molybdopterin. Acts by mediating the incorporation of 2 sulfur atoms from thiocarboxylated MOCS2A into precursor Z to generate a dithiolene group. In Ajellomyces capsulatus (strain NAm1 / WU24) (Darling's disease fungus), this protein is Molybdopterin synthase catalytic subunit.